Consider the following 2005-residue polypeptide: Sodium channel protein type 2 subunit alpha (2005 aa).

Over 1-129 (MARSVLVPPG…KLAIKILVHS (129 aa)) the chain is Cytoplasmic. At serine 4 the chain carries Phosphoserine. The tract at residues 28–61 (RIAEEKAKRPKQERKDEDDENGPKPNSDLEAGKS) is disordered. Residue lysine 38 forms a Glycyl lysine isopeptide (Lys-Gly) (interchain with G-Cter in SUMO1) linkage. An I repeat occupies 111–456 (ILTPFNPIRK…QQMLEQLKKQ (346 aa)). The chain crosses the membrane as a helical span at residues 130-148 (LFNVLIMCTILTNCVFMTM). The Extracellular segment spans residues 149 to 155 (SNPPDWT). Residues 156-176 (KNVEYTFTGIYTFESLIKILA) traverse the membrane as a helical segment. Residues 177 to 190 (RGFCLEDFTFLRNP) lie on the Cytoplasmic side of the membrane. The chain crosses the membrane as a helical span at residues 191–208 (WNWLDFTVITFAYVTEFV). Residues 209-214 (NLGNVS) lie on the Extracellular side of the membrane. A glycan (N-linked (GlcNAc...) asparagine) is linked at asparagine 212. The helical transmembrane segment at 215 to 231 (ALRTFRVLRALKTISVI) threads the bilayer. Over 232-250 (PGLKTIVGALIQSVKKLSD) the chain is Cytoplasmic. Residues 251-270 (VMILTVFCLSVFALIGLQLF) form a helical membrane-spanning segment. The Extracellular portion of the chain corresponds to 271 to 369 (MGNLRNKCLQ…PNYGYTSFDT (99 aa)). Cysteine 278 and cysteine 338 are joined by a disulfide. Residues asparagine 285, asparagine 291, asparagine 297, asparagine 303, asparagine 308, and asparagine 340 are each glycosylated (N-linked (GlcNAc...) asparagine). An intramembrane region (pore-forming) is located at residues 370-394 (FSWAFLSLFRLMTQDFWENLYQLTL). Residues 395–401 (RAAGKTY) are Extracellular-facing. The chain crosses the membrane as a helical span at residues 402 to 422 (MIFFVLVIFLGSFYLINLILA). The Cytoplasmic segment spans residues 423–759 (VVAMAYEEQN…HVVNLVVMDP (337 aa)). 9 positions are modified to phosphoserine: serine 468, serine 471, serine 484, serine 526, serine 528, serine 531, serine 553, serine 554, and serine 558. The tract at residues 494–529 (SSKSEKELKNRRKKKKQKEQAGEEEKEDAVRKSASE) is disordered. Over residues 511 to 529 (KEQAGEEEKEDAVRKSASE) the composition is skewed to basic and acidic residues. Residue serine 554 is modified to Phosphoserine; by PKC; in vitro. 2 positions are modified to phosphoserine; by PKC; in vitro: serine 573 and serine 576. A phosphoserine mark is found at serine 589, serine 610, serine 623, serine 687, serine 688, and serine 721. Residues 591 to 634 (NDFADDEHSTFEDNDSRRDSLFVPHRHGERRPSNVSQASRASRG) form a disordered region. The segment covering 596–610 (DEHSTFEDNDSRRDS) has biased composition (basic and acidic residues). One copy of the II repeat lies at 741-1013 (CCKPWLKVKH…QIAVGRMQKG (273 aa)). A helical membrane pass occupies residues 760–778 (FVDLAITICIVLNTLFMAM). At 779–789 (EHYPMTEQFSS) the chain is on the extracellular side. A helical transmembrane segment spans residues 790–809 (VLSVGNLVFTGIFTAEMFLK). Residues 810–823 (IIAMDPYYYFQEGW) are Cytoplasmic-facing. A helical membrane pass occupies residues 824-843 (NIFDGFIVSLSLMELGLANV). Residues 844 to 845 (EG) are Extracellular-facing. The chain crosses the membrane as a helical span at residues 846-863 (LSVLRSFRLLRVFKLAKS). Residues 864–879 (WPTLNMLIKIIGNSVG) lie on the Cytoplasmic side of the membrane. Residues 880 to 898 (ALGNLTLVLAIIVFIFAVV) form a helical membrane-spanning segment. Topologically, residues 899-927 (GMQLFGKSYKECVCKISNDCELPRWHMHH) are extracellular. A disulfide bridge links cysteine 912 with cysteine 918. The segment at 917 to 918 (DC) is binds SCN2B. The pore-forming intramembrane region spans 928–948 (FFHSFLIVFRVLCGEWIETMW). Residues 949–961 (DCMEVAGQTMCLT) lie on the Extracellular side of the membrane. Residues cysteine 950 and cysteine 959 are joined by a disulfide bond. The chain crosses the membrane as a helical span at residues 962–982 (VFMMVMVIGNLVVLNLFLALL). The Cytoplasmic portion of the chain corresponds to 983 to 1209 (LSSFSSDNLA…TCYKIVEHNW (227 aa)). The tract at residues 1120–1166 (EEFSSESDMEESKEKLNATSSSEGSTVDIGAPAEGEQPEAEPEESLE) is disordered. Positions 1155–1166 (EQPEAEPEESLE) are enriched in acidic residues. Residues 1190–1504 (KGKLWWNLRK…KKYYNAMKKL (315 aa)) form an III repeat. A helical membrane pass occupies residues 1210 to 1227 (FETFIVFMILLSSGALAF). Residues 1228-1240 (EDIYIEQRKTIKT) are Extracellular-facing. A helical transmembrane segment spans residues 1241-1259 (MLEYADKVFTYIFILEMLL). Residues 1260 to 1273 (KWVAYGFQMYFTNA) lie on the Cytoplasmic side of the membrane. The helical transmembrane segment at 1274 to 1292 (WCWLDFLIVDVSLVSLTAN) threads the bilayer. At 1293–1300 (ALGYSELG) the chain is on the extracellular side. Residues 1301–1319 (AIKSLRTLRALRPLRALSR) form a helical membrane-spanning segment. Residues 1320–1336 (FEGMRVVVNALLGAIPS) are Cytoplasmic-facing. The helical transmembrane segment at 1337–1356 (IMNVLLVCLIFWLIFSIMGV) threads the bilayer. Residues 1357–1408 (NLFAGKFYHCINYTTGEMFDVSVVNNYSECQALIESNQTARWKNVKVNFDNV) lie on the Extracellular side of the membrane. Cysteine 1366 and cysteine 1386 form a disulfide bridge. N-linked (GlcNAc...) asparagine glycans are attached at residues asparagine 1368, asparagine 1382, and asparagine 1393. Residues 1409 to 1430 (GLGYLSLLQVATFKGWMDIMYA) constitute an intramembrane region (pore-forming). Residues 1431-1447 (AVDSRNVELQPKYEDNL) are Extracellular-facing. The helical transmembrane segment at 1448–1469 (YMYLYFVIFIIFGSFFTLNLFI) threads the bilayer. The Cytoplasmic segment spans residues 1470–1532 (GVIIDNFNQQ…MVFDFVTKQV (63 aa)). Residue serine 1506 is modified to Phosphoserine; by PKC. The IV repeat unit spans residues 1513 to 1811 (IPRPANKFQG…WEKFDPDATQ (299 aa)). The chain crosses the membrane as a helical span at residues 1533–1550 (FDISIMILICLNMVTMMV). Residues 1551–1561 (ETDDQSQEMTN) are Extracellular-facing. The chain crosses the membrane as a helical span at residues 1562 to 1580 (ILYWINLVFIVLFTGECVL). The Cytoplasmic portion of the chain corresponds to 1581 to 1592 (KLISLRHYYFTI). Residues 1593-1610 (GWNIFDFVVVILSIVGMF) traverse the membrane as a helical segment. Residues 1611–1623 (LAELIEKYFVSPT) are Extracellular-facing. Residues 1624 to 1640 (LFRVIRLARIGRILRLI) form a helical membrane-spanning segment. At 1641-1659 (KGAKGIRTLLFALMMSLPA) the chain is on the cytoplasmic side. Residues 1660–1677 (LFNIGLLLFLVMFIYAIF) form a helical membrane-spanning segment. Residues 1678 to 1699 (GMSNFAYVKREVGIDDMFNFET) lie on the Extracellular side of the membrane. An intramembrane region (pore-forming) is located at residues 1700–1722 (FGNSMICLFQITTSAGWDGLLAP). Residues 1723–1752 (ILNSGPPDCDPEKDHPGSSVKGDCGNPSVG) lie on the Extracellular side of the membrane. Residues cysteine 1731 and cysteine 1746 are joined by a disulfide bond. A helical membrane pass occupies residues 1753-1775 (IFFFVSYIIISFLVVVNMYIAVI). The Cytoplasmic segment spans residues 1776-2005 (LENFSVATEE…KGKDIRESKK (230 aa)). Residues 1905-1934 (EEVSAIVIQRAYRRYLLKQKVKKVSSIYKK) form the IQ domain. Position 1930 is a phosphoserine (serine 1930). Positions 1933–1964 (KKDKGKEDEGTPIKEDIITDKLNENSTPEKTD) are enriched in basic and acidic residues. The disordered stretch occupies residues 1933 to 2005 (KKDKGKEDEG…KGKDIRESKK (73 aa)). Phosphothreonine is present on residues threonine 1943, threonine 1963, and threonine 1966. Serine 1971 carries the phosphoserine modification. Basic and acidic residues predominate over residues 1979–2005 (TKPEKEKFEKDKSEKEDKGKDIRESKK).

The protein belongs to the sodium channel (TC 1.A.1.10) family. Nav1.2/SCN2A subfamily. As to quaternary structure, heterooligomer of a large alpha subunit and a smaller beta subunit. Heterooligomer with SCN2B or SCN4B; disulfide-linked. Heterooligomer with SCN1B or SCN3B; non-covalently linked. Interacts with NEDD4L. Interacts with CALM. Interacts with TMEM233. Interacts with the conotoxin GVIIJ. Interacts with the scorpion toxin BMK M1. May be ubiquitinated by NEDD4L; which would promote its endocytosis. Post-translationally, phosphorylation at Ser-1506 by PKC in a highly conserved cytoplasmic loop slows inactivation of the sodium channel and reduces peak sodium currents. In terms of processing, sumoylated at Lys-38. Sumoylation is induced by hypoxia, increases voltage-gated sodium current and mediates the early response to acute hypoxia in neurons. Sumoylated SCN2A is located at the cell membrane. As to expression, expressed in brain (at protein level). Expressed in cerebellar granule neurons (at protein level).

Its subcellular location is the cell membrane. The catalysed reaction is Na(+)(in) = Na(+)(out). In terms of biological role, mediates the voltage-dependent sodium ion permeability of excitable membranes. Assuming opened or closed conformations in response to the voltage difference across the membrane, the protein forms a sodium-selective channel through which Na(+) ions may pass in accordance with their electrochemical gradient. Implicated in the regulation of hippocampal replay occurring within sharp wave ripples (SPW-R) important for memory. The protein is Sodium channel protein type 2 subunit alpha of Rattus norvegicus (Rat).